We begin with the raw amino-acid sequence, 708 residues long: Tryptophan synthase (708 aa).

Positions 1-305 (MEGIKQTFQR…EADIDAQLAA (305 aa)) are tryptophan synthase alpha chain. Active-site proton acceptor residues include E49 and D60. Positions 306-708 (LHGTIPKRFG…GPKIGWDLRF (403 aa)) are tryptophan synthase beta chain. Residue K392 is modified to N6-(pyridoxal phosphate)lysine.

In the N-terminal section; belongs to the TrpA family. It in the C-terminal section; belongs to the TrpB family. Pyridoxal 5'-phosphate serves as cofactor.

The enzyme catalyses (1S,2R)-1-C-(indol-3-yl)glycerol 3-phosphate + L-serine = D-glyceraldehyde 3-phosphate + L-tryptophan + H2O. It functions in the pathway amino-acid biosynthesis; L-tryptophan biosynthesis; L-tryptophan from chorismate: step 5/5. This is Tryptophan synthase (trp-3) from Neurospora crassa (strain ATCC 24698 / 74-OR23-1A / CBS 708.71 / DSM 1257 / FGSC 987).